The chain runs to 200 residues: Recombination protein RecR (200 aa).

The segment at 57–72 (CRQCRTLTEDDLCPQC) adopts a C4-type zinc-finger fold. In terms of domain architecture, Toprim spans 80–175 (TLLCVVEGPM…IASRIAHGVP (96 aa)).

This sequence belongs to the RecR family.

Its function is as follows. May play a role in DNA repair. It seems to be involved in an RecBC-independent recombinational process of DNA repair. It may act with RecF and RecO. The protein is Recombination protein RecR of Pseudomonas fluorescens (strain Pf0-1).